We begin with the raw amino-acid sequence, 235 residues long: Phosphoribosylaminoimidazole-succinocarboxamide synthase (235 aa).

This sequence belongs to the SAICAR synthetase family.

The catalysed reaction is 5-amino-1-(5-phospho-D-ribosyl)imidazole-4-carboxylate + L-aspartate + ATP = (2S)-2-[5-amino-1-(5-phospho-beta-D-ribosyl)imidazole-4-carboxamido]succinate + ADP + phosphate + 2 H(+). Its pathway is purine metabolism; IMP biosynthesis via de novo pathway; 5-amino-1-(5-phospho-D-ribosyl)imidazole-4-carboxamide from 5-amino-1-(5-phospho-D-ribosyl)imidazole-4-carboxylate: step 1/2. The sequence is that of Phosphoribosylaminoimidazole-succinocarboxamide synthase from Clostridium acetobutylicum (strain ATCC 824 / DSM 792 / JCM 1419 / IAM 19013 / LMG 5710 / NBRC 13948 / NRRL B-527 / VKM B-1787 / 2291 / W).